A 74-amino-acid chain; its full sequence is Large ribosomal subunit protein bL31 (74 aa).

It belongs to the bacterial ribosomal protein bL31 family. Type A subfamily. Part of the 50S ribosomal subunit.

In terms of biological role, binds the 23S rRNA. The chain is Large ribosomal subunit protein bL31 from Synechococcus sp. (strain JA-2-3B'a(2-13)) (Cyanobacteria bacterium Yellowstone B-Prime).